A 175-amino-acid polypeptide reads, in one-letter code: RNA pyrophosphohydrolase (175 aa).

The Nudix hydrolase domain occupies 6–149; that stretch reads GYRPNVGIVI…KRDVYRRVMK (144 aa). The Nudix box motif lies at 38–59; that stretch reads GGINAGETAEQAMYRELFEEVG.

The protein belongs to the Nudix hydrolase family. RppH subfamily. It depends on a divalent metal cation as a cofactor.

Its function is as follows. Accelerates the degradation of transcripts by removing pyrophosphate from the 5'-end of triphosphorylated RNA, leading to a more labile monophosphorylated state that can stimulate subsequent ribonuclease cleavage. The chain is RNA pyrophosphohydrolase from Sodalis glossinidius (strain morsitans).